A 593-amino-acid polypeptide reads, in one-letter code: Chromosomal replication initiator protein DnaA (593 aa).

A domain I, interacts with DnaA modulators region spans residues 1 to 71 (MSDPCWEQCV…EIISNSDAGP (71 aa)). The domain II stretch occupies residues 71–256 (PKSLEIAVAQ…DVEGGIQHKH (186 aa)). Positions 97–186 (AVPVPDPLPS…STESSADRER (90 aa)) are disordered. Positions 113-124 (SFQPPKGNTSAD) are enriched in polar residues. Positions 257–473 (NLNTTFIFDN…GALKRVIANA (217 aa)) are domain III, AAA+ region. ATP contacts are provided by Gly-301, Gly-303, Lys-304, and Thr-305. Residues 474 to 593 (QFTQRSISVE…VKNLLRTLTT (120 aa)) form a domain IV, binds dsDNA region.

Belongs to the DnaA family. Oligomerizes as a right-handed, spiral filament on DNA at oriC.

It localises to the cytoplasm. Functionally, plays an essential role in the initiation and regulation of chromosomal replication. ATP-DnaA binds to the origin of replication (oriC) to initiate formation of the DNA replication initiation complex once per cell cycle. Binds the DnaA box (a 9 base pair repeat at the origin) and separates the double-stranded (ds)DNA. Forms a right-handed helical filament on oriC DNA; dsDNA binds to the exterior of the filament while single-stranded (ss)DNA is stabiized in the filament's interior. The ATP-DnaA-oriC complex binds and stabilizes one strand of the AT-rich DNA unwinding element (DUE), permitting loading of DNA polymerase. After initiation quickly degrades to an ADP-DnaA complex that is not apt for DNA replication. Binds acidic phospholipids. This chain is Chromosomal replication initiator protein DnaA, found in Teredinibacter turnerae (strain ATCC 39867 / T7901).